The primary structure comprises 113 residues: Mitochondrial import protein 1 (113 aa).

The helical transmembrane segment at 39-62 (LVSFVGSCSINLLLPFLNGMMLGF) threads the bilayer.

It belongs to the MIM1 family. As to quaternary structure, component of the MIM complex containing at least MIM1 and MIM2. Interacts with MIM2; interaction is direct. Interacts with TOM70.

Its subcellular location is the mitochondrion outer membrane. Component of the MIM complex required for mitochondrial outer membrane protein import. The MIM complex cooperates with the receptor TOM70 in binding of precursor proteins and promotes their insertion and assembly into the outer membrane. Involved in import of the subset of proteins with multiple alpha-helical transmembrane segments, including UGO1. Required for the assembly of the TOM (translocase of outer membrane) receptor complex, which is responsible for the recognition and translocation of cytosolically synthesized mitochondrial preproteins. Required specifically for assembly of TOM40, TOM20, and TOM70, but not TOM22. The polypeptide is Mitochondrial import protein 1 (MIM1) (Saccharomyces cerevisiae (strain ATCC 204508 / S288c) (Baker's yeast)).